Reading from the N-terminus, the 1706-residue chain is Bifunctional hemolysin/adenylate cyclase (1706 aa).

The tract at residues 1–399 is a, catalytic; it reads MQQSHQAGYA…RRPSLGAVER (399 aa). 349-356 provides a ligand contact to ATP; the sequence is AYGVAGKS. The disordered stretch occupies residues 383–405; sequence VPASPGLRRPSLGAVERQDSGYD. A b, Ala/Gly-rich region spans residues 400–912; that stretch reads QDSGYDSLDG…LKHSIKLDVI (513 aa). The required for interaction with CyaC stretch occupies residues 500-698; the sequence is LSAAVFGLGE…SVVGAPVAVV (199 aa). 2 N6-palmitoyl lysine lipidation sites follow: lysine 860 and lysine 983. Residues 913–1656 are c; that stretch reads GGDGDDVVLA…RDADHRVEII (744 aa). 17 Hemolysin-type calcium-binding repeats span residues 1014-1031, 1032-1049, 1050-1067, 1155-1172, 1173-1190, 1279-1296, 1297-1314, 1315-1332, 1335-1352, 1411-1428, 1429-1446, 1447-1464, 1468-1484, 1537-1554, 1555-1572, 1573-1590, and 1603-1620; these read IGGA…DNFL, AGGS…NDTL, VGGE…DDVF, WGHD…DDIL, RGGL…NDIF, MGQG…DDLL, FGGD…NDTL, YGGL…NDWF, TQAR…VDTV, TGDA…ADVL, AGGE…DDQL, SGDA…DDWF, AANA…RDTV, IGDA…NDVL, SGGA…SDLL, SGDA…DDTY, and ESGG…ADQL. Residues 1657-1706 are d, Asp/Gly-rich; it reads HAANQAVDQAGIEKLVEAMAQYPDPGAAAAAPPAARVPDTLMQSLAVNWR.

In the N-terminal section; belongs to the adenylyl cyclase class-2 family. The protein in the C-terminal section; belongs to the RTX prokaryotic toxin family. Released in a processed form. In terms of processing, palmitoylated at Lys-860 and Lys-983 by CyaC. The toxin only becomes active when modified in position Lys-983: palmitoylation is required for efficient membrane insertion and pore formation of the acylated Hemolysin chain.

It localises to the secreted. The protein resides in the host cell membrane. The catalysed reaction is ATP = 3',5'-cyclic AMP + diphosphate. With respect to regulation, activated by host calmodulin. Functionally, bifunctional adenylate cyclase toxin-hemolysin that plays a crucial role in host colonization. It causes whooping cough by acting on mammalian cells by elevating cAMP-concentration and thus disrupts normal cell function. Adenylate cyclase that is activated by host intracellular calmodulin and catalyzes un-regulated conversion of ATP to cAMP, thereby impairing microbicidal functions of immune effector cells and inducing apoptosis of lung macrophages. In terms of biological role, hemolysin that forms small cation-selective membrane channels, leading to hemolytic activity. The hemolytic activity of CyaA is weak compared with that of the HlyA of E.coli. This Bordetella pertussis (strain Tohama I / ATCC BAA-589 / NCTC 13251) protein is Bifunctional hemolysin/adenylate cyclase (cya).